Consider the following 197-residue polypeptide: 3-isopropylmalate dehydratase small subunit (197 aa).

Belongs to the LeuD family. LeuD type 1 subfamily. In terms of assembly, heterodimer of LeuC and LeuD.

It catalyses the reaction (2R,3S)-3-isopropylmalate = (2S)-2-isopropylmalate. Its pathway is amino-acid biosynthesis; L-leucine biosynthesis; L-leucine from 3-methyl-2-oxobutanoate: step 2/4. Catalyzes the isomerization between 2-isopropylmalate and 3-isopropylmalate, via the formation of 2-isopropylmaleate. The protein is 3-isopropylmalate dehydratase small subunit of Azobacteroides pseudotrichonymphae genomovar. CFP2.